Reading from the N-terminus, the 375-residue chain is Ketohexokinase (375 aa).

Residue Asp-319 coordinates beta-D-fructose.

It belongs to the carbohydrate kinase PfkB family. As to quaternary structure, homodimer.

It carries out the reaction beta-D-fructose + ATP = beta-D-fructose 1-phosphate + ADP + H(+). The protein operates within carbohydrate metabolism; fructose metabolism. With respect to regulation, activated in the presence of 0.5 M KCl. 85% activity at 3.5 M KCl. 60% activity without KCl. In terms of biological role, catalyzes the ATP-dependent phosphorylation of the ketose sugar fructose to fructose-1-phosphate. Does not produce fructose-6-phosphate. The sugars D-glucose, D-galactose, L-rhamnose, D-xylose, L-arabinose and D-ribose are not substrates of this enzyme. The protein is Ketohexokinase of Haloferax volcanii (strain ATCC 29605 / DSM 3757 / JCM 8879 / NBRC 14742 / NCIMB 2012 / VKM B-1768 / DS2) (Halobacterium volcanii).